The primary structure comprises 801 residues: Cadherin-20 (801 aa).

An N-terminal signal peptide occupies residues 1-34; the sequence is MWTTGRMSNAKSWLGLGTSLYFWALMDLTATVLS. The propeptide occupies 35-59; the sequence is STPMPEVELETLFSGRSQSHQRSKR. Residues 60–619 are Extracellular-facing; it reads SWVWNQFFVL…AYLLPVSLSR (560 aa). Cadherin domains follow at residues 61–165, 166–274, 275–389, 390–494, and 494–610; these read WVWN…EPKF, LDGP…PPRF, PQKH…PPVF, EPGF…APEF, and FPRF…SPEA. Residue Asn261 is glycosylated (N-linked (GlcNAc...) asparagine). N-linked (GlcNAc...) asparagine glycosylation is found at Asn420, Asn461, and Asn542. Residues 620-640 form a helical membrane-spanning segment; it reads GALIAILACIFVLLVLVLLIL. Residues 641 to 801 are Cytoplasmic-facing; the sequence is SMRRHRKQPY…GASEGPAPLW (161 aa).

Expressed in brain. Highest level of expression in the retina. In embryo it is synthesized by the forebrain, anterior neural ridge, developing visual system, primitive external granular layer of the cerebellum and a subset of neural crest cells likely to develop into melanoblasts.

It localises to the cell membrane. Its function is as follows. Cadherins are calcium-dependent cell adhesion proteins. They preferentially interact with themselves in a homophilic manner in connecting cells; cadherins may thus contribute to the sorting of heterogeneous cell types. In Mus musculus (Mouse), this protein is Cadherin-20 (Cdh20).